We begin with the raw amino-acid sequence, 285 residues long: Hydrolase in pqqF 5'region (285 aa).

The CN hydrolase domain occupies 22-258; it reads MRVALYQCPP…EALIIGTLDR (237 aa). Glu-60 (proton acceptor) is an active-site residue. Lys-131 functions as the Proton donor in the catalytic mechanism. The active-site Nucleophile is the Cys-165.

It belongs to the carbon-nitrogen hydrolase superfamily. NIT1/NIT2 family.

This Pseudomonas protegens (strain DSM 19095 / LMG 27888 / CFBP 6595 / CHA0) protein is Hydrolase in pqqF 5'region.